The chain runs to 282 residues: MKTNQNLRFYWRKTHNKLMLGLSYISVIIGLFWLCWILFTLITKGIPALSIDLFTQSTPAPNEKGGLLNALIGSFFIVGAGTLIGTPIGVLAGTYLAEYGRYSRFAQITRFLNDILLSAPSIIIGLFVYSLYVSKIEHFSGWAGAFALALLLIPIVVRTTDNMLLLVPNNLREAAAALGCSQWQVIMMICYRAAKSGILTGVLLAVARISGETAPLLFTALSNQFLSWNMNEPIANLPVVIYQYAASPFTDWNNLAWAGAALITLFVLCLNIFTRLFFQHKK.

Helical transmembrane passes span Leu-22 to Ile-42, Leu-71 to Leu-91, Phe-111 to Leu-131, Ile-136 to Val-156, Ile-198 to Phe-218, and Asn-254 to Thr-274. The region spanning Leu-71–Thr-274 is the ABC transmembrane type-1 domain.

Belongs to the binding-protein-dependent transport system permease family. CysTW subfamily.

It is found in the cell inner membrane. Its function is as follows. Part of the binding-protein-dependent transport system for phosphate; probably responsible for the translocation of the substrate across the membrane. This is Phosphate transport system permease protein PstA (pstA) from Haemophilus influenzae (strain ATCC 51907 / DSM 11121 / KW20 / Rd).